A 277-amino-acid polypeptide reads, in one-letter code: Putative thiosulfate sulfurtransferase (277 aa).

Rhodanese domains are found at residues 18–125 (DSAN…PLST) and 154–274 (SIKI…VPIE). Catalysis depends on cysteine 233, which acts as the Cysteine persulfide intermediate. Arginine 238 lines the substrate pocket.

The catalysed reaction is thiosulfate + hydrogen cyanide = thiocyanate + sulfite + 2 H(+). In terms of biological role, may be a sulfotransferase involved in the formation of thiosulfate. In Mycobacterium leprae (strain TN), this protein is Putative thiosulfate sulfurtransferase (cysA).